The sequence spans 149 residues: Ribonuclease pancreatic (149 aa).

The N-terminal stretch at 1–25 (MGLEKSLILFPLFFLLLGWVQPSLG) is a signal peptide. K32 and R35 together coordinate substrate. The active-site Proton acceptor is the H37. 4 disulfide bridges follow: C51/C109, C65/C120, C83/C135, and C90/C97. Substrate-binding positions include 66 to 70 (KPVNT) and K91. H144 (proton donor) is an active-site residue.

It belongs to the pancreatic ribonuclease family. As to quaternary structure, monomer. Interacts with and forms tight 1:1 complexes with RNH1. Dimerization of two such complexes may occur. Interaction with RNH1 inhibits this protein. In terms of tissue distribution, pancreas.

The protein resides in the secreted. The enzyme catalyses an [RNA] containing cytidine + H2O = an [RNA]-3'-cytidine-3'-phosphate + a 5'-hydroxy-ribonucleotide-3'-[RNA].. It catalyses the reaction an [RNA] containing uridine + H2O = an [RNA]-3'-uridine-3'-phosphate + a 5'-hydroxy-ribonucleotide-3'-[RNA].. Functionally, endonuclease that catalyzes the cleavage of RNA on the 3' side of pyrimidine nucleotides. Acts on single-stranded and double-stranded RNA. The polypeptide is Ribonuclease pancreatic (Rnase1) (Mus musculus (Mouse)).